A 754-amino-acid polypeptide reads, in one-letter code: 5-methyltetrahydropteroyltriglutamate--homocysteine methyltransferase (754 aa).

Residues 17–20 (RELK) and lysine 117 each bind 5-methyltetrahydropteroyltri-L-glutamate. Residues 431-433 (IGS) and glutamate 484 contribute to the L-homocysteine site. L-methionine-binding positions include 431–433 (IGS) and glutamate 484. Residues 515–516 (RC) and tryptophan 561 contribute to the 5-methyltetrahydropteroyltri-L-glutamate site. Residue aspartate 599 participates in L-homocysteine binding. Aspartate 599 serves as a coordination point for L-methionine. Glutamate 605 is a 5-methyltetrahydropteroyltri-L-glutamate binding site. 3 residues coordinate Zn(2+): histidine 641, cysteine 643, and glutamate 665. The active-site Proton donor is histidine 694. Zn(2+) is bound at residue cysteine 726.

This sequence belongs to the vitamin-B12 independent methionine synthase family. It depends on Zn(2+) as a cofactor.

The enzyme catalyses 5-methyltetrahydropteroyltri-L-glutamate + L-homocysteine = tetrahydropteroyltri-L-glutamate + L-methionine. It functions in the pathway amino-acid biosynthesis; L-methionine biosynthesis via de novo pathway; L-methionine from L-homocysteine (MetE route): step 1/1. In terms of biological role, catalyzes the transfer of a methyl group from 5-methyltetrahydrofolate to homocysteine resulting in methionine formation. The sequence is that of 5-methyltetrahydropteroyltriglutamate--homocysteine methyltransferase from Salmonella dublin (strain CT_02021853).